An 885-amino-acid polypeptide reads, in one-letter code: 3-hydroxy-3-methylglutaryl-coenzyme A reductase (885 aa).

Topologically, residues 1–9 are cytoplasmic; the sequence is MLSRLFRMH. Residues 10–39 form a helical membrane-spanning segment; the sequence is GLFVASHPWEVIVGTVTLTICMMSMNMFTG. Over 40–56 the chain is Lumenal; that stretch reads NDKICGWNYECPKFEED. Residues 57 to 78 traverse the membrane as a helical segment; sequence VLSSDIIILTITRCIAILYIYF. The SSD domain maps to 61 to 218; sequence DIIILTITRC…MTFFPACVSL (158 aa). The short motif at 75–78 is the INSIG-binding motif element; that stretch reads YIYF. Over 79–89 the chain is Cytoplasmic; it reads QFQNLRQLGSK. A Glycyl lysine isopeptide (Lys-Gly) (interchain with G-Cter in ubiquitin) cross-link involves residue Lys-89. The chain crosses the membrane as a helical span at residues 90 to 114; sequence YILGIAGLFTIFSSFVFSTVVIHFL. At 115-123 the chain is on the lumenal side; that stretch reads DKELTGLNE. A helical membrane pass occupies residues 124–149; it reads ALPFFLLLIDLSRASALAKFALSSNS. Residues 150-159 lie on the Cytoplasmic side of the membrane; the sequence is QDEVRENIAR. A helical transmembrane segment spans residues 160–187; sequence GMAILGPTFTLDALVECLVIGVGTMSGV. The Lumenal portion of the chain corresponds to 188-191; it reads RQLE. A helical membrane pass occupies residues 192 to 220; that stretch reads IMCCFGCMSVLATYFVFMTFFPACVSLVL. Over 221–248 the chain is Cytoplasmic; the sequence is ELSRESREGRPIWQLSHFARVLEGEENK. Lys-248 participates in a covalent cross-link: Glycyl lysine isopeptide (Lys-Gly) (interchain with G-Cter in ubiquitin). The chain crosses the membrane as a helical span at residues 249–275; the sequence is PNPVTQRVKIIMSLGLVLVHAHSRWIA. Residues 276–314 lie on the Lumenal side of the membrane; that stretch reads DPSPQNSTADNSKVSLGLDENVSKRIEPSVSLWQFYLSK. Residues Asn-281 and Asn-296 are each glycosylated (N-linked (GlcNAc...) asparagine). Residues 315 to 339 form a helical membrane-spanning segment; sequence MISMDIEQVITLTLALLLAVKYIFF. Residues 340–885 are Cytoplasmic-facing; the sequence is EQAETESTLS…LQGTCTKKAA (546 aa). Active-site charge relay system residues include Glu-558, Lys-688, and Asp-764. His-863 functions as the Proton donor in the catalytic mechanism. A Phosphoserine; by AMPK modification is found at Ser-869.

This sequence belongs to the HMG-CoA reductase family. As to quaternary structure, homotetramer. Homodimer. Interacts (via its SSD) with INSIG1; the interaction, accelerated by sterols, leads to the recruitment of HMGCR to AMFR/gp78 for its ubiquitination by the sterol-mediated ERAD pathway. Interacts with UBIAD1. In terms of processing, undergoes sterol-mediated ubiquitination and ER-associated degradation (ERAD). Accumulation of sterols in the endoplasmic reticulum (ER) membrane, triggers binding of the reductase to the ER membrane protein INSIG1 or INSIG2. The INSIG1 binding leads to the recruitment of the ubiquitin ligase, AMFR/gp78, RNF139 or RNF145, initiating ubiquitination of the reductase. The ubiquitinated reductase is then extracted from the ER membrane and delivered to cytosolic 26S proteosomes by a mechanism probably mediated by the ATPase Valosin-containing protein VCP/p97. The INSIG2-binding leads to the recruitment of the ubiquitin ligase RNF139, initiating ubiquitination of the reductase. Lys-248 is the main site of ubiquitination. Ubiquitination is enhanced by the presence of a geranylgeranylated protein. Post-translationally, N-glycosylated. Deglycosylated by NGLY1 on release from the endoplasmic reticulum (ER) in a sterol-mediated manner. Phosphorylated. Phosphorylation at Ser-869 reduces the catalytic activity. High expression found in liver, heart, kidney, bladder and subcutaneous fat. Lower levels in lung, uterus and large intestine. Lowest levels in cerebrum, spleen, spinal cord, stomach, ovary, longissimus muscle, and small intestine.

It localises to the endoplasmic reticulum membrane. The protein localises to the peroxisome membrane. It catalyses the reaction (R)-mevalonate + 2 NADP(+) + CoA = (3S)-3-hydroxy-3-methylglutaryl-CoA + 2 NADPH + 2 H(+). The protein operates within metabolic intermediate biosynthesis; (R)-mevalonate biosynthesis; (R)-mevalonate from acetyl-CoA: step 3/3. With respect to regulation, regulated by a negative feedback mechanism through sterols and non-sterol metabolites derived from mevalonate. Phosphorylation at Ser-869 down-regulates the catalytic activity. In terms of biological role, catalyzes the conversion of (3S)-hydroxy-3-methylglutaryl-CoA (HMG-CoA) to mevalonic acid, the rate-limiting step in the synthesis of cholesterol and other isoprenoids, thus plays a critical role in cellular cholesterol homeostasis. The protein is 3-hydroxy-3-methylglutaryl-coenzyme A reductase (HMGCR) of Sus scrofa (Pig).